The chain runs to 777 residues: Polyribonucleotide nucleotidyltransferase (777 aa).

The Mg(2+) site is built by D494 and D500. The KH domain occupies 561–620 (PRIITLQIDPSKIGALIGPGGKTIRSIIEQTGAQIDVEDDGRVFVTTPDADGARMAQSLI). The S1 motif domain occupies 630–699 (GEIFTGKVVR…GTGKLSLSRR (70 aa)). Residues 703–777 (TGETAEQRKS…NDRRGGGFRG (75 aa)) are disordered. The segment covering 718–727 (GPRGGGGGGD) has biased composition (gly residues). Composition is skewed to basic and acidic residues over residues 728–761 (RGPR…DRGP) and 768–777 (NDRRGGGFRG).

Belongs to the polyribonucleotide nucleotidyltransferase family. Requires Mg(2+) as cofactor.

It is found in the cytoplasm. The enzyme catalyses RNA(n+1) + phosphate = RNA(n) + a ribonucleoside 5'-diphosphate. Involved in mRNA degradation. Catalyzes the phosphorolysis of single-stranded polyribonucleotides processively in the 3'- to 5'-direction. In Herpetosiphon aurantiacus (strain ATCC 23779 / DSM 785 / 114-95), this protein is Polyribonucleotide nucleotidyltransferase.